We begin with the raw amino-acid sequence, 89 residues long: MTLDTAEKQKLIESHQVHPTDTGSVEIQVAMISERITKLSEHLQGNIHDYASRQGLLKMIGKRKRLLSYIKGKDPKNYQDLIKKIGIRG.

It belongs to the universal ribosomal protein uS15 family. Part of the 30S ribosomal subunit. Forms a bridge to the 50S subunit in the 70S ribosome, contacting the 23S rRNA.

In terms of biological role, one of the primary rRNA binding proteins, it binds directly to 16S rRNA where it helps nucleate assembly of the platform of the 30S subunit by binding and bridging several RNA helices of the 16S rRNA. Its function is as follows. Forms an intersubunit bridge (bridge B4) with the 23S rRNA of the 50S subunit in the ribosome. The polypeptide is Small ribosomal subunit protein uS15 (Prochlorococcus marinus (strain MIT 9515)).